Here is a 263-residue protein sequence, read N- to C-terminus: Palmitoyltransferase ZDHHC22 (263 aa).

Residues methionine 1–valine 9 are Cytoplasmic-facing. The chain crosses the membrane as a helical span at residues valine 10–phenylalanine 30. The Lumenal segment spans residues leucine 31–alanine 47. The chain crosses the membrane as a helical span at residues valine 48–valine 68. Over valine 69–asparagine 125 the chain is Cytoplasmic. The 41-residue stretch at proline 91 to leucine 131 folds into the DHHC domain. Cysteine 111 functions as the S-palmitoyl cysteine intermediate in the catalytic mechanism. A run of 2 helical transmembrane segments spans residues phenylalanine 126–alanine 146 and tyrosine 147–proline 167. The Cytoplasmic segment spans residues threonine 168–aspartate 182. The chain crosses the membrane as a helical span at residues methionine 183–cysteine 203. At cysteine 204 to lysine 263 the chain is on the lumenal side.

Belongs to the DHHC palmitoyltransferase family. In terms of assembly, interacts with CNN3.

It is found in the endoplasmic reticulum membrane. Its subcellular location is the golgi apparatus membrane. The enzyme catalyses L-cysteinyl-[protein] + hexadecanoyl-CoA = S-hexadecanoyl-L-cysteinyl-[protein] + CoA. Functionally, palmitoyltransferase that could catalyze the addition of palmitate onto various protein substrates and be involved in a variety of cellular processes. Catalyzes the palmitoylation of KCNMA1, regulating localization of KCNMA1 to the plasma membrane. Might also mediate palmitoylation of CNN3. This chain is Palmitoyltransferase ZDHHC22, found in Rattus norvegicus (Rat).